Reading from the N-terminus, the 481-residue chain is tRNA pseudouridine(38/39) synthase (481 aa).

Alanine 2 carries the N-acetylalanine modification. Over residues 29–40 (KKEQANNKDSNI) the composition is skewed to basic and acidic residues. The tract at residues 29 to 54 (KKEQANNKDSNIRENSSGAGGKPKRA) is disordered. The active-site Nucleophile is aspartate 118. Tyrosine 195 is a binding site for substrate. Phosphothreonine is present on threonine 456.

It belongs to the tRNA pseudouridine synthase TruA family.

Its subcellular location is the nucleus. It catalyses the reaction uridine(38/39) in tRNA = pseudouridine(38/39) in tRNA. Formation of pseudouridine at position 39 in the anticodon stem and loop of transfer RNAs. The protein is tRNA pseudouridine(38/39) synthase (PUS3) of Bos taurus (Bovine).